We begin with the raw amino-acid sequence, 239 residues long: Serine protease SplF (239 aa).

The N-terminal stretch at 1–36 (MNKNIIIKSIAALTILTSITGVGTTVVDGIQQTAKA) is a signal peptide. Catalysis depends on charge relay system residues H75, D114, and S192.

This sequence belongs to the peptidase S1B family.

The protein localises to the secreted. This Staphylococcus aureus (strain JH9) protein is Serine protease SplF (splF).